A 179-amino-acid chain; its full sequence is ATP synthase subunit delta (179 aa).

This sequence belongs to the ATPase delta chain family. As to quaternary structure, F-type ATPases have 2 components, F(1) - the catalytic core - and F(0) - the membrane proton channel. F(1) has five subunits: alpha(3), beta(3), gamma(1), delta(1), epsilon(1). F(0) has three main subunits: a(1), b(2) and c(10-14). The alpha and beta chains form an alternating ring which encloses part of the gamma chain. F(1) is attached to F(0) by a central stalk formed by the gamma and epsilon chains, while a peripheral stalk is formed by the delta and b chains.

It is found in the cell membrane. Its function is as follows. F(1)F(0) ATP synthase produces ATP from ADP in the presence of a proton or sodium gradient. F-type ATPases consist of two structural domains, F(1) containing the extramembraneous catalytic core and F(0) containing the membrane proton channel, linked together by a central stalk and a peripheral stalk. During catalysis, ATP synthesis in the catalytic domain of F(1) is coupled via a rotary mechanism of the central stalk subunits to proton translocation. This protein is part of the stalk that links CF(0) to CF(1). It either transmits conformational changes from CF(0) to CF(1) or is implicated in proton conduction. In Clostridium botulinum (strain Kyoto / Type A2), this protein is ATP synthase subunit delta.